The primary structure comprises 352 residues: Glycoprotein integral membrane protein 1 (352 aa).

A signal peptide spans 1–25; it reads MASRCKIHLTVAYLLILCILASAQS. Residues 26 to 281 lie on the Extracellular side of the membrane; that stretch reads KQMTTETVVL…KLRRFLSDSV (256 aa). 6 N-linked (GlcNAc...) asparagine glycosylation sites follow: Asn-36, Asn-44, Asn-89, Asn-109, Asn-151, and Asn-197. Positions 206–245 are disordered; sequence NSETTQEEIAAPGKLPETPLRMDPETLYESREEEERRSDS. A compositionally biased stretch (basic and acidic residues) spans 225 to 244; that stretch reads LRMDPETLYESREEEERRSD. A helical membrane pass occupies residues 282 to 302; sequence PLFFLVMWVVVVGVAGSAVVI. The Cytoplasmic portion of the chain corresponds to 303 to 352; it reads KILDLIFPSCEHRGFFHLNPETLMPDDEKVSLIDNMEGDMTEKSILLIEK.

The protein resides in the membrane. In Danio rerio (Zebrafish), this protein is Glycoprotein integral membrane protein 1 (ginm1).